We begin with the raw amino-acid sequence, 89 residues long: Nucleoside triphosphatase I (89 aa).

The Helicase ATP-binding domain maps to 42–89 (FLGLDKMHSLLLFHDTGVGKTITTTFIIKQLKNIYTNWSILLLVKKHL). 55–62 (HDTGVGKT) is a binding site for ATP.

It belongs to the helicase family. NPH I subfamily.

It carries out the reaction a ribonucleoside 5'-triphosphate + H2O = a ribonucleoside 5'-diphosphate + phosphate + H(+). In terms of biological role, serves two roles in transcription; it acts in concert with viral termination factor/capping enzyme to catalyze release of UUUUUNU-containing nascent RNA from the elongation complex, and it acts by itself as a polymerase elongation factor to facilitate readthrough of intrinsic pause sites. This is Nucleoside triphosphatase I (NPH1) from Swinepox virus (strain Kasza) (SWPV).